Reading from the N-terminus, the 205-residue chain is Thymidylate kinase (205 aa).

11–18 (GVEGAGKS) provides a ligand contact to ATP.

This sequence belongs to the thymidylate kinase family.

It carries out the reaction dTMP + ATP = dTDP + ADP. In terms of biological role, phosphorylation of dTMP to form dTDP in both de novo and salvage pathways of dTTP synthesis. The sequence is that of Thymidylate kinase from Vesicomyosocius okutanii subsp. Calyptogena okutanii (strain HA).